Here is a 363-residue protein sequence, read N- to C-terminus: Insulin gene enhancer protein ISL-3 (363 aa).

LIM zinc-binding domains are found at residues 27–80 and 89–143; these read CVGC…CKRD and CAKC…RADH. Residues 191-250 constitute a DNA-binding region (homeobox); sequence TTRVRTVLNEKQLHTLRTCYNANPRPDALMREQLVEMTGLSPRVIRVWFQNKRCKDKKRS. The segment at 328-363 is disordered; that stretch reads FSESGSLGNSSGSDVTSLSSHLPDTPNSMVPSPVET. Positions 329–340 are enriched in low complexity; it reads SESGSLGNSSGS. The segment covering 341-363 has biased composition (polar residues); the sequence is DVTSLSSHLPDTPNSMVPSPVET.

It is found in the nucleus. In terms of biological role, binds to one of the cis-acting domain of the insulin gene enhancer. May be involved in subtype specialization of primary motoneurons. The polypeptide is Insulin gene enhancer protein ISL-3 (isl3) (Oncorhynchus tshawytscha (Chinook salmon)).